A 41-amino-acid polypeptide reads, in one-letter code: Photosystem I reaction center subunit IX (41 aa).

The helical transmembrane segment at 7 to 27 (YLSTVPVVFAIWLTFTAGLII) threads the bilayer.

This sequence belongs to the PsaJ family.

It is found in the plastid. It localises to the chloroplast thylakoid membrane. In terms of biological role, may help in the organization of the PsaE and PsaF subunits. This chain is Photosystem I reaction center subunit IX, found in Bigelowiella natans (Pedinomonas minutissima).